Here is a 389-residue protein sequence, read N- to C-terminus: MVIAAAVIVPLGLLFFISGLAVNLFQAVCYVLIRPLSKNTYRKINRVVAETLWLELVWIVDWWAGVKIQVFADNETFNRMGKEHALVVCNHRSDIDWLVGWILAQRSGCLGSALAVMKKSSKFLPVIGWSMWFSEYLFLERNWAKDESTLKSGLQRLSDFPRPFWLALFVEGTRFTEAKLKAAQEYAASSELPIPRNVLIPRTKGFVSAVSNMRSFVPAIYDMTVTIPKTSPPPTMLRLFKGQPSVVHVHIKCHSMKDLPESDDAIAQWCRDQFVAKDALLDKHIAADTFPGQQEQNIGRPIKSLAVVLSWACVLTLGAIKFLHWAQLFSSWKGITISALGLGIITLCMQILIRSSQSERSTPAKVVPAKPKDNHHPESSSQTETEKEK.

A helical transmembrane segment spans residues Val2–Val22. Positions His91 to Asp96 match the HXXXXD motif motif. Transmembrane regions (helical) follow at residues Leu305–Trp325 and Lys333–Ile353. Positions Gln357–Lys389 are disordered. Residues Lys370–Lys389 are compositionally biased toward basic and acidic residues.

This sequence belongs to the 1-acyl-sn-glycerol-3-phosphate acyltransferase family. Interacts with GPAT9 and DGAT1. Present in roots, leaves, stems, floral buds and siliques (at protein level). Widely expressed. In contrast to LPAT1, it is not expressed at higher level in leaves.

Its subcellular location is the endoplasmic reticulum membrane. The enzyme catalyses a 1-acyl-sn-glycero-3-phosphate + an acyl-CoA = a 1,2-diacyl-sn-glycero-3-phosphate + CoA. The protein operates within phospholipid metabolism; CDP-diacylglycerol biosynthesis; CDP-diacylglycerol from sn-glycerol 3-phosphate: step 2/3. Functionally, converts lysophosphatidic acid (LPA) into phosphatidic acid by incorporating acyl moiety at the 2 position. Has preference for C-18-CoA substrates compared to C-16-CoA substrates. Required for female but not male gametophyte development. The protein is 1-acyl-sn-glycerol-3-phosphate acyltransferase 2 (LPAT2) of Arabidopsis thaliana (Mouse-ear cress).